Reading from the N-terminus, the 54-residue chain is uncharacterized protein (54 aa).

Residues 1 to 54 (MWTLKARKEHTGISGKPTARTDRHGSTRSGDSELQASARRFSRLPDRCGAQGVT) form a disordered region.

This is an uncharacterized protein from Mycobacterium tuberculosis (strain ATCC 25618 / H37Rv).